A 336-amino-acid polypeptide reads, in one-letter code: Coproporphyrin III ferrochelatase (336 aa).

Fe-coproporphyrin III is bound by residues S52 and Y116. Fe(2+) contacts are provided by H172 and E255.

It belongs to the ferrochelatase family.

It localises to the cytoplasm. It carries out the reaction Fe-coproporphyrin III + 2 H(+) = coproporphyrin III + Fe(2+). It functions in the pathway porphyrin-containing compound metabolism; protoheme biosynthesis. Functionally, involved in coproporphyrin-dependent heme b biosynthesis. Catalyzes the insertion of ferrous iron into coproporphyrin III to form Fe-coproporphyrin III. In Mycolicibacterium paratuberculosis (strain ATCC BAA-968 / K-10) (Mycobacterium paratuberculosis), this protein is Coproporphyrin III ferrochelatase.